We begin with the raw amino-acid sequence, 262 residues long: Tetratricopeptide repeat protein 33 (262 aa).

A disordered region spans residues 17 to 63 (ATSQQFEAEAADEKDAAENEDGNWLQASKRRKETLQEGCKQRSQQLK). 3 TPR repeats span residues 59 to 92 (SQQL…TPGD), 93 to 126 (ATLY…NPHS), and 127 to 160 (WEAW…YPMN). Serine 197 carries the phosphoserine modification.

The sequence is that of Tetratricopeptide repeat protein 33 (Ttc33) from Mus musculus (Mouse).